The following is a 186-amino-acid chain: Ribosome-recycling factor (186 aa).

This sequence belongs to the RRF family.

The protein resides in the cytoplasm. Its function is as follows. Responsible for the release of ribosomes from messenger RNA at the termination of protein biosynthesis. May increase the efficiency of translation by recycling ribosomes from one round of translation to another. The protein is Ribosome-recycling factor of Chlorobium chlorochromatii (strain CaD3).